Here is a 318-residue protein sequence, read N- to C-terminus: Pantothenate kinase (318 aa).

ATP is bound at residue 96–103; that stretch reads GSVAVGKS.

It belongs to the prokaryotic pantothenate kinase family.

It localises to the cytoplasm. It carries out the reaction (R)-pantothenate + ATP = (R)-4'-phosphopantothenate + ADP + H(+). Its pathway is cofactor biosynthesis; coenzyme A biosynthesis; CoA from (R)-pantothenate: step 1/5. The chain is Pantothenate kinase from Rhodopseudomonas palustris (strain BisA53).